The chain runs to 405 residues: MQSWPSPPVPGIPGTGRPLRLYDSATGEVRPTDPGPVATMYVCGITPYDATHLGHAATYLAFDLVHRMWLDAGHQVHYVQNITDIDDPLLERAQRDGVSWRKLADREIGLFRDDMTALRVIPPADYIGAVEAMDEVTAAVQELIDAGAAYRVPDEQYPDVYFDVTASGQFGYESRYDEATMLRLSAERGGDPDRPGKRQRLDPLLWRVERPQEPSWSSPMGPGRPGWHIECAVIAGNRIGPVIDLQGGGSDLIFPHHECSAAHAEVLSGKRPFARHYTHAGMIGLDGEKMSKSRGNLVFVSRLLHQGVDPMAMRLGLLAGHYRQDRAWSDEVLTAAEARLARWRAAAARTGVDADSVVQAIRDGLADDLDTPTVIEALDAWAADETLDGSAVAAAVDALLGVRLV.

Cysteine 43 serves as a coordination point for Zn(2+). Residues 43-46 (CGIT), threonine 58, and 81-83 (NIT) each bind L-cysteinyl-5'-AMP. A 'HIGH' region motif is present at residues 45 to 55 (ITPYDATHLGH). The 'ERGGDP' region motif lies at 187–192 (ERGGDP). Tryptophan 227 is a binding site for L-cysteinyl-5'-AMP. Cysteine 231 provides a ligand contact to Zn(2+). 249–251 (GSD) is a binding site for L-cysteinyl-5'-AMP. Histidine 256 is a binding site for Zn(2+). Isoleucine 283 serves as a coordination point for L-cysteinyl-5'-AMP. The short motif at 289–293 (KMSKS) is the 'KMSKS' region element.

Belongs to the class-I aminoacyl-tRNA synthetase family. MshC subfamily. In terms of assembly, monomer. It depends on Zn(2+) as a cofactor.

The enzyme catalyses 1D-myo-inositol 2-amino-2-deoxy-alpha-D-glucopyranoside + L-cysteine + ATP = 1D-myo-inositol 2-(L-cysteinylamino)-2-deoxy-alpha-D-glucopyranoside + AMP + diphosphate + H(+). Catalyzes the ATP-dependent condensation of GlcN-Ins and L-cysteine to form L-Cys-GlcN-Ins. The chain is L-cysteine:1D-myo-inositol 2-amino-2-deoxy-alpha-D-glucopyranoside ligase from Nakamurella multipartita (strain ATCC 700099 / DSM 44233 / CIP 104796 / JCM 9543 / NBRC 105858 / Y-104) (Microsphaera multipartita).